A 135-amino-acid chain; its full sequence is Fatty acid-binding protein 5 (135 aa).

An N-acetylalanine modification is found at Ala2. Lys17 bears the N6-acetyllysine mark. Residues Lys24–Lys34 carry the Nuclear localization signal motif. Residues Cys43 and Arg109 each coordinate N-eicosanoyl ethanolamine. Cys120 and Cys127 are disulfide-bonded. Arg129–Tyr131 provides a ligand contact to (9Z,12Z)-octadecadienoate. Position 131 (Tyr131) interacts with N-eicosanoyl ethanolamine. Tyr131 is a hexadecanoate binding site. Tyr131 is subject to Phosphotyrosine.

Belongs to the calycin superfamily. Fatty-acid binding protein (FABP) family. In terms of assembly, monomer. Homodimer. As to expression, keratinocytes; highly expressed in psoriatic skin. Expressed in brain gray matter.

Its subcellular location is the cytoplasm. The protein resides in the nucleus. It is found in the synapse. It localises to the postsynaptic density. The protein localises to the secreted. The enzyme catalyses hexadecanoate(out) = hexadecanoate(in). It catalyses the reaction (9Z,12Z)-octadecadienoate(out) = (9Z,12Z)-octadecadienoate(in). The catalysed reaction is (9Z)-octadecenoate(out) = (9Z)-octadecenoate(in). Its function is as follows. Intracellular carrier for long-chain fatty acids and related active lipids, such as endocannabinoids, that regulate the metabolism and actions of the ligands they bind. In addition to the cytosolic transport, selectively delivers specific fatty acids from the cytosol to the nucleus, wherein they activate nuclear receptors. Delivers retinoic acid to the nuclear receptor peroxisome proliferator-activated receptor delta; which promotes proliferation and survival. May also serve as a synaptic carrier of endocannabinoid at central synapses and thus controls retrograde endocannabinoid signaling. Modulates inflammation by regulating PTGES induction via NF-kappa-B activation, and prostaglandin E2 (PGE2) biosynthesis during inflammation. May be involved in keratinocyte differentiation. The polypeptide is Fatty acid-binding protein 5 (Homo sapiens (Human)).